The chain runs to 291 residues: Pyridoxal 5'-phosphate synthase subunit PdxS (291 aa).

Asp-23 serves as a coordination point for D-ribose 5-phosphate. Lys-80 functions as the Schiff-base intermediate with D-ribose 5-phosphate in the catalytic mechanism. Gly-152 provides a ligand contact to D-ribose 5-phosphate. Arg-164 is a binding site for D-glyceraldehyde 3-phosphate. D-ribose 5-phosphate is bound by residues Gly-213 and 234–235 (GS).

The protein belongs to the PdxS/SNZ family. As to quaternary structure, in the presence of PdxT, forms a dodecamer of heterodimers.

It carries out the reaction aldehydo-D-ribose 5-phosphate + D-glyceraldehyde 3-phosphate + L-glutamine = pyridoxal 5'-phosphate + L-glutamate + phosphate + 3 H2O + H(+). It functions in the pathway cofactor biosynthesis; pyridoxal 5'-phosphate biosynthesis. Catalyzes the formation of pyridoxal 5'-phosphate from ribose 5-phosphate (RBP), glyceraldehyde 3-phosphate (G3P) and ammonia. The ammonia is provided by the PdxT subunit. Can also use ribulose 5-phosphate and dihydroxyacetone phosphate as substrates, resulting from enzyme-catalyzed isomerization of RBP and G3P, respectively. This is Pyridoxal 5'-phosphate synthase subunit PdxS from Clostridium acetobutylicum (strain ATCC 824 / DSM 792 / JCM 1419 / IAM 19013 / LMG 5710 / NBRC 13948 / NRRL B-527 / VKM B-1787 / 2291 / W).